Here is a 330-residue protein sequence, read N- to C-terminus: Phenylalanine--tRNA ligase alpha subunit (330 aa).

E254 contributes to the Mg(2+) binding site.

It belongs to the class-II aminoacyl-tRNA synthetase family. Phe-tRNA synthetase alpha subunit type 1 subfamily. As to quaternary structure, tetramer of two alpha and two beta subunits. Mg(2+) serves as cofactor.

Its subcellular location is the cytoplasm. The enzyme catalyses tRNA(Phe) + L-phenylalanine + ATP = L-phenylalanyl-tRNA(Phe) + AMP + diphosphate + H(+). The protein is Phenylalanine--tRNA ligase alpha subunit (pheS) of Neisseria meningitidis serogroup B (strain ATCC BAA-335 / MC58).